The chain runs to 497 residues: Delayed-rectifier potassium channel regulatory subunit KCNS1 (497 aa).

Residues 1 to 186 (MVSEFPGPGS…LTMENPGYSL (186 aa)) lie on the Cytoplasmic side of the membrane. Residues 187 to 208 (PSKLFSCVSIGVVLASIAAMCI) form a helical membrane-spanning segment. Residues 209 to 239 (HSLPEYQAREAAAAVAAVAAGRSAEEVRDDP) are Extracellular-facing. A helical transmembrane segment spans residues 240–262 (VLRRLEYFCIAWFSFEVSSRLLL). Over 263–273 (APSTRNFFCHP) the chain is Cytoplasmic. The helical transmembrane segment at 274 to 291 (LNLIDIVSVLPFYLTLLA) threads the bilayer. The Extracellular segment spans residues 292–309 (GAALGDQRGASGEELGDL). A helical; Voltage-sensor membrane pass occupies residues 310 to 330 (GKVVQVFRLMRIFRVLKLARH). Over 331 to 345 (STGLRSLGATLKHSY) the chain is Cytoplasmic. The helical transmembrane segment at 346–367 (REVGILLLYLAVGVSVFSGVAY) threads the bilayer. The Extracellular portion of the chain corresponds to 368–379 (TAEEENEGFHTI). The helical intramembrane region spans 380 to 391 (PACWWWGTVSMT). A Selectivity filter motif is present at residues 392–397 (TVGYGD). Residues 392 to 399 (TVGYGDVV) lie within the membrane without spanning it. The Extracellular segment spans residues 400–406 (PETVGGK). The chain crosses the membrane as a helical span at residues 407–435 (LAASGCILGGILVVALPITIIFNKFSHFY). Residues 436–497 (RRQKALEAAV…PREPAKSHSY (62 aa)) lie on the Cytoplasmic side of the membrane. The tract at residues 464-497 (SDVSLETSRDTSQEGRSTDLETQAPREPAKSHSY) is disordered. Positions 470 to 482 (TSRDTSQEGRSTD) are enriched in basic and acidic residues.

Belongs to the potassium channel family. S (TC 1.A.1.2) subfamily. Kv9.1/KCNS1 sub-subfamily. In terms of assembly, heterotetramer with KCNB1 and KCNB2. Does not form homomultimers. Detected in brain, but not in the other tissues tested. The highest levels of expression are in olfactory bulb, cerebral cortex, hippocampus, habenula, basolateral amygdaloid nuclei and cerebellum.

It localises to the cell membrane. Functionally, potassium channel regulatory subunit that modulate the delayed rectifier voltage-gated potassium channel activity of KCNB1 and KCNB2 by altering their kinetics, expression levels, and shifting the half-inactivation potential to more polarized values. While it does not form functional channels on its own, it can form functional heterotetrameric channels with KCNB1 and KCNB2. Each regulatory subunit has unique regulatory properties that can lead to extensive inhibition, significant changes in kinetics, and/or substantial shifts in the voltage dependencies of the inactivation process. The protein is Delayed-rectifier potassium channel regulatory subunit KCNS1 of Mus musculus (Mouse).